Reading from the N-terminus, the 549-residue chain is Glucose-6-phosphate isomerase (549 aa).

Glutamate 355 acts as the Proton donor in catalysis. Active-site residues include histidine 386 and lysine 514.

Belongs to the GPI family.

The protein resides in the cytoplasm. It carries out the reaction alpha-D-glucose 6-phosphate = beta-D-fructose 6-phosphate. The protein operates within carbohydrate biosynthesis; gluconeogenesis. Its pathway is carbohydrate degradation; glycolysis; D-glyceraldehyde 3-phosphate and glycerone phosphate from D-glucose: step 2/4. Catalyzes the reversible isomerization of glucose-6-phosphate to fructose-6-phosphate. The polypeptide is Glucose-6-phosphate isomerase (Salmonella paratyphi A (strain AKU_12601)).